A 564-amino-acid polypeptide reads, in one-letter code: Efflux pump hmp6 (564 aa).

A compositionally biased stretch (basic and acidic residues) spans Met1–Pro25. A disordered region spans residues Met1–Asp46. The next 8 membrane-spanning stretches (helical) occupy residues Leu58 to Ile78, Val96 to Tyr118, Ile125 to Pro145, Ile156 to Val176, Gly186 to Phe206, Trp214 to Phe234, Phe259 to Gly279, and Ile289 to Phe309. N-linked (GlcNAc...) asparagine glycosylation is found at Asn312 and Asn322. 4 helical membrane-spanning segments follow: residues Ile330–Phe350, Ser361–Val383, Ala395–Ser415, and Ile452–Ala472.

Belongs to the major facilitator superfamily. TCR/Tet family.

It is found in the cell membrane. Functionally, efflux pump that might be required for efficient secretion of hypothemycin or other secondary metabolies produced by the hypothemycin gene cluster. The polypeptide is Efflux pump hmp6 (Hypomyces subiculosus (Nectria subiculosa)).